The primary structure comprises 314 residues: tRNA dimethylallyltransferase (314 aa).

8–15 lines the ATP pocket; that stretch reads GPTGAGKS. Position 10 to 15 (10 to 15) interacts with substrate; the sequence is TGAGKS.

Belongs to the IPP transferase family. Monomer. Mg(2+) is required as a cofactor.

It carries out the reaction adenosine(37) in tRNA + dimethylallyl diphosphate = N(6)-dimethylallyladenosine(37) in tRNA + diphosphate. Functionally, catalyzes the transfer of a dimethylallyl group onto the adenine at position 37 in tRNAs that read codons beginning with uridine, leading to the formation of N6-(dimethylallyl)adenosine (i(6)A). This Mycobacterium tuberculosis (strain ATCC 25177 / H37Ra) protein is tRNA dimethylallyltransferase.